The chain runs to 460 residues: 3-isopropylmalate dehydratase large subunit (460 aa).

3 residues coordinate [4Fe-4S] cluster: C338, C398, and C401.

It belongs to the aconitase/IPM isomerase family. LeuC type 1 subfamily. In terms of assembly, heterodimer of LeuC and LeuD. Requires [4Fe-4S] cluster as cofactor.

The catalysed reaction is (2R,3S)-3-isopropylmalate = (2S)-2-isopropylmalate. Its pathway is amino-acid biosynthesis; L-leucine biosynthesis; L-leucine from 3-methyl-2-oxobutanoate: step 2/4. Functionally, catalyzes the isomerization between 2-isopropylmalate and 3-isopropylmalate, via the formation of 2-isopropylmaleate. In Streptococcus thermophilus (strain ATCC BAA-250 / LMG 18311), this protein is 3-isopropylmalate dehydratase large subunit.